The primary structure comprises 339 residues: Spore coat polysaccharide biosynthesis protein SpsG (339 aa).

The helical transmembrane segment at isoleucine 241–leucine 261 threads the bilayer.

The protein to M.jannaschii MJ1062.

Its subcellular location is the cell membrane. It participates in spore coat biogenesis; spore coat polysaccharide biosynthesis. The sequence is that of Spore coat polysaccharide biosynthesis protein SpsG (spsG) from Bacillus subtilis (strain 168).